A 316-amino-acid polypeptide reads, in one-letter code: Ribosomal RNA small subunit methyltransferase H (316 aa).

S-adenosyl-L-methionine contacts are provided by residues 35–37 (AGH), aspartate 55, phenylalanine 84, aspartate 105, and glutamine 112.

The protein belongs to the methyltransferase superfamily. RsmH family.

The protein localises to the cytoplasm. The enzyme catalyses cytidine(1402) in 16S rRNA + S-adenosyl-L-methionine = N(4)-methylcytidine(1402) in 16S rRNA + S-adenosyl-L-homocysteine + H(+). Its function is as follows. Specifically methylates the N4 position of cytidine in position 1402 (C1402) of 16S rRNA. The sequence is that of Ribosomal RNA small subunit methyltransferase H from Streptococcus pneumoniae (strain Hungary19A-6).